The following is a 312-amino-acid chain: UDP-N-acetylenolpyruvoylglucosamine reductase (312 aa).

One can recognise an FAD-binding PCMH-type domain in the interval 37 to 205; sequence VGGPADALVV…VCAEFALCPG (169 aa). The active site involves Arg185. Ser234 serves as the catalytic Proton donor. Glu304 is an active-site residue.

It belongs to the MurB family. The cofactor is FAD.

It localises to the cytoplasm. The catalysed reaction is UDP-N-acetyl-alpha-D-muramate + NADP(+) = UDP-N-acetyl-3-O-(1-carboxyvinyl)-alpha-D-glucosamine + NADPH + H(+). The protein operates within cell wall biogenesis; peptidoglycan biosynthesis. Functionally, cell wall formation. This chain is UDP-N-acetylenolpyruvoylglucosamine reductase, found in Syntrophus aciditrophicus (strain SB).